Here is a 185-residue protein sequence, read N- to C-terminus: Ribosome-recycling factor (185 aa).

This sequence belongs to the RRF family.

The protein resides in the cytoplasm. In terms of biological role, responsible for the release of ribosomes from messenger RNA at the termination of protein biosynthesis. May increase the efficiency of translation by recycling ribosomes from one round of translation to another. The polypeptide is Ribosome-recycling factor (Pseudomonas paraeruginosa (strain DSM 24068 / PA7) (Pseudomonas aeruginosa (strain PA7))).